Here is a 244-residue protein sequence, read N- to C-terminus: MSSVAIIAASGVGKRMNLRNGLSKQFLEIGGYPVIYHTLAAFQRASSIDKIYIATKPDSIATLETLAEEHQFSKINAIIAGGKERQDSISNCIELIALHIEKAEIDRPDTILVHDGARPFITPDEIDQIAQLSHHYGACVPATKPKDTIKYISDQPGFFGETLDRSLLLQVQTPQGFASEKLVEAHRKAREAESYATDDAALVEKFFPDQKIKVFEMGYHNIKITTPEDIFLGEAIYAQLQQQS.

It belongs to the IspD/TarI cytidylyltransferase family. IspD subfamily.

The enzyme catalyses 2-C-methyl-D-erythritol 4-phosphate + CTP + H(+) = 4-CDP-2-C-methyl-D-erythritol + diphosphate. It functions in the pathway isoprenoid biosynthesis; isopentenyl diphosphate biosynthesis via DXP pathway; isopentenyl diphosphate from 1-deoxy-D-xylulose 5-phosphate: step 2/6. Functionally, catalyzes the formation of 4-diphosphocytidyl-2-C-methyl-D-erythritol from CTP and 2-C-methyl-D-erythritol 4-phosphate (MEP). The polypeptide is 2-C-methyl-D-erythritol 4-phosphate cytidylyltransferase (Prosthecochloris aestuarii (strain DSM 271 / SK 413)).